Reading from the N-terminus, the 312-residue chain is Methionyl-tRNA formyltransferase (312 aa).

110–113 (SLLP) is a (6S)-5,6,7,8-tetrahydrofolate binding site.

This sequence belongs to the Fmt family.

It catalyses the reaction L-methionyl-tRNA(fMet) + (6R)-10-formyltetrahydrofolate = N-formyl-L-methionyl-tRNA(fMet) + (6S)-5,6,7,8-tetrahydrofolate + H(+). Functionally, attaches a formyl group to the free amino group of methionyl-tRNA(fMet). The formyl group appears to play a dual role in the initiator identity of N-formylmethionyl-tRNA by promoting its recognition by IF2 and preventing the misappropriation of this tRNA by the elongation apparatus. The protein is Methionyl-tRNA formyltransferase of Streptococcus suis (strain 05ZYH33).